An 82-amino-acid polypeptide reads, in one-letter code: MTEMNQTAIRRPFHRRRKTCPFSGTNAPKIDYKDIKLLQRYISERGKIVPSRITAISQKKQRELANAIKRARFLGLLPYVIK.

The segment at 1–25 (MTEMNQTAIRRPFHRRRKTCPFSGT) is disordered.

It belongs to the bacterial ribosomal protein bS18 family. As to quaternary structure, part of the 30S ribosomal subunit. Forms a tight heterodimer with protein bS6.

Binds as a heterodimer with protein bS6 to the central domain of the 16S rRNA, where it helps stabilize the platform of the 30S subunit. This Bartonella henselae (strain ATCC 49882 / DSM 28221 / CCUG 30454 / Houston 1) (Rochalimaea henselae) protein is Small ribosomal subunit protein bS18.